The chain runs to 345 residues: Guanine nucleotide-binding protein alpha-4 subunit (345 aa).

Residues 30 to 345 (KDVKLLLLGP…TILSQALEHF (316 aa)) enclose the G-alpha domain. The tract at residues 33–46 (KLLLLGPGESGKST) is G1 motif. Residues 38–45 (GPGESGKS), 171–177 (LRCRVRT), 196–200 (DVGGQ), 265–268 (NKKD), and Ala320 each bind GTP. 2 residues coordinate Mg(2+): Ser45 and Thr177. The segment at 169–177 (DVLRCRVRT) is G2 motif. The interval 192 to 201 (LKIVDVGGQR) is G3 motif. The G4 motif stretch occupies residues 261-268 (VLFLNKKD). Positions 318 to 323 (TCAVDT) are G5 motif.

It belongs to the G-alpha family. In terms of assembly, g proteins are composed of 3 units; alpha, beta and gamma. The alpha chain contains the guanine nucleotide binding site.

Its function is as follows. Guanine nucleotide-binding proteins (G proteins) are involved as modulators or transducers in various transmembrane signaling systems. G alpha-4 plays a role in morphogenesis of the multicellular structure. The polypeptide is Guanine nucleotide-binding protein alpha-4 subunit (gpaD) (Dictyostelium discoideum (Social amoeba)).